A 232-amino-acid polypeptide reads, in one-letter code: Zinc import ATP-binding protein ZnuC (232 aa).

The region spanning 5 to 220 (VNLKNIFVFY…PSFIEMFGCY (216 aa)) is the ABC transporter domain. An ATP-binding site is contributed by 37–44 (GPNGSGKS).

The protein belongs to the ABC transporter superfamily. Zinc importer (TC 3.A.1.15.5) family. The complex is composed of two ATP-binding proteins (ZnuC), two transmembrane proteins (ZnuB) and a solute-binding protein (ZnuA).

Its subcellular location is the cell membrane. It catalyses the reaction Zn(2+)(out) + ATP(in) + H2O(in) = Zn(2+)(in) + ADP(in) + phosphate(in) + H(+)(in). Functionally, part of the ABC transporter complex ZnuABC involved in zinc import. Responsible for energy coupling to the transport system. This is Zinc import ATP-binding protein ZnuC from Wigglesworthia glossinidia brevipalpis.